Consider the following 341-residue polypeptide: HTH-type transcriptional repressor PurR (341 aa).

Residues 2–56 form the HTH lacI-type domain; it reads ATIKDVAKRANVSTTTVSHVINKTRFVAEETRNAVWAAIKELHYSPSAVARSLKV. Residues 4–23 constitute a DNA-binding region (H-T-H motif); it reads IKDVAKRANVSTTTVSHVIN. The DNA-binding element occupies 48-56; sequence SAVARSLKV. Hypoxanthine is bound by residues Tyr-73, Arg-190, Thr-192, Phe-221, and Asp-275.

As to quaternary structure, homodimer.

Its pathway is purine metabolism; purine nucleotide biosynthesis [regulation]. Functionally, is the main repressor of the genes involved in the de novo synthesis of purine nucleotides, regulating purB, purC, purEK, purF, purHD, purL, purMN and guaBA expression. PurR is allosterically activated to bind its cognate DNA by binding the purine corepressors, hypoxanthine or guanine, thereby effecting transcription repression. This chain is HTH-type transcriptional repressor PurR, found in Salmonella typhi.